A 316-amino-acid polypeptide reads, in one-letter code: Haloacid dehalogenase-like hydrolase domain-containing protein At4g39970 (316 aa).

Residues 1–46 (MAVSCNHSAILFSPSSTAGSSSVTSSSSLIGFPRFQTLRFKSRSVY) constitute a chloroplast transit peptide. Asp-69 (nucleophile) is an active-site residue. Positions 69, 71, and 259 each coordinate Mg(2+). Catalysis depends on Asp-71, which acts as the Proton donor.

This sequence belongs to the HAD-like hydrolase superfamily. DOG/GPP family. Mg(2+) serves as cofactor.

It localises to the plastid. The protein localises to the chloroplast. The polypeptide is Haloacid dehalogenase-like hydrolase domain-containing protein At4g39970 (Arabidopsis thaliana (Mouse-ear cress)).